We begin with the raw amino-acid sequence, 1837 residues long: MELMFAEWEDGERFSFEDSDRFEEDSLCSFISEAESLCQNWRGWRKQSAGPNSPTGGGGGGGSGGTRMRDGLVIPLVELSAKQVAFHIPFEVVEKVYPPVPEQLQLRIAFWSFPENEEDIRLYSCLANGSADEFQRGDQLFRMRAVKDPLQIGFHLSATVVPPQMVPPKGAYNVAVMFDRCRVTSCSCTCGAGAKWCTHVVALCLFRIHNASAVCLRAPVSESLSRLQRDQLQKFAQYLISELPQQILPTAQRLLDELLSSQSTAINTVCGAPDPTAGPSASDQSTWYLDESTLTDNIKKTLHKFCGPSPVVFSDVNSMYLSSTEPPAAAEWACLLRPLRGREPEGVWNLLSIVREMFKRRDSNAAPLLEILTDQCLTYEQITGWWYSVRTSASHSSASGHTGRSNGQSEVAAHACASMCDEMVTLWRLAVLDPALSPQRRRELCTQLRQWQLKVIENVKRGQHKKTLERLFPGFRPAVEACYFNWEEAYPLPGVTYSGTDRKLALCWARALPSRPGASRSGGLEESRDRPRPLPTEPAVRPKEPGTKRKGLGEGVPSSQRGPRRLSAEGGDKALHKMGPGGGKAKALGGAGSGSKGSAGGGSKRRLSSEDSSLEPDLAEMSLDDSSLALGAEASTFGGFPESPPPCPLHGGSRGPSTFLPEPPDTYEEDGGVYFSEGPEPPTASVGPPGLLPGDVCTQDDLPSTDESGNGLPKTKEAAPAVGEEDDDYQAYYLNAQDGAGGEEEKAEGGAGEEHDLFAGLKPLEQESRMEVLFACAEALHAHGYSSEASRLTVELAQDLLANPPDLKVEPPPAKGKKNKVSTSRQTWVATNTLSKAAFLLTVLSERPEHHNLAFRVGMFALELQRPPASTKALEVKLAYQESEVAALLKKIPLGPSEMSTMRCRAEELREGTLCDYRPVLPLMLASFIFDVLCAPGSRPPSRNWNSETPGDEELGFEAAVAALGMKTTVSEAEHPLLCEGTRREKGDLALALMITYKDDQAKLKKILDKLLDRESQTHKPQTLSSFYSSSRPTTASQRSPSKHGGPSAPGALQPLTSGSAGPAQPGSVAGAGPGPTEGFTEKNVPESSPHSPCEGLPSEAALTPRPEGKVPSRLALGSRGGYNGRGWGSPGRPKKKHTGMASIDSSAPETTSDSSPTLSRRPLRGGWAPTSWGRGQDSDSISSSSSDSLGSSSSSGSRRASASGGARAKTVEVGRYKGRRPESHAPHVPNQPSEAAAHFYFELAKTVLIKAGGNSSTSIFTHPSSSGGHQGPHRNLHLCAFEIGLYALGLHNFVSPNWLSRTYSSHVSWITGQAMEIGSAALTILVECWDGHLTPPEVASLADRASRARDSNMVRAAAELALSCLPHAHALNPNEIQRALVQCKEQDNLMLEKACMAVEEAAKGGGVYPEVLFEVAHQWFWLYEQTAGGSSTAREGATSCSASGIRAGGEAGRGMPEGRGGPGTEPVTVAAAAVTAAATVVPVISVGSSLYPGPGLGHGHSPGLHPYTALQPHLPCSPQYLTHPAHPAHPMPHMPRPAVFPVPSSAYPQGVHPAFLGAQYPYSVTPPSLAATAVSFPVPSMAPITVHPYHTEPGLPLPTSVACELWGQGTVSSVHPASTFPAIQGASLPALTTQPSPLVSGGFPPPEEETHSQPVNPHSLHHLHAAYRVGMLALEMLGRRAHNDHPNNFSRSPPYTDDVKWLLGLAAKLGVNYVHQFCVGAAKGVLSPFVLQEIVMETLQRLSPAHAHNHLRAPAFHQLVQRCQQAYMQYIHHRLIHLTPADYDDFVNAIRSARSAFCLTPMGMMQFNDILQNLKRSKQTKELWQRVSLEMATFSP.

Ser-36, Ser-48, and Ser-53 each carry phosphoserine. A disordered region spans residues 45–65 (RKQSAGPNSPTGGGGGGGSGG). Residues 55 to 65 (TGGGGGGGSGG) show a composition bias toward gly residues. The SWIM-type zinc-finger motif lies at 172 to 208 (YNVAVMFDRCRVTSCSCTCGAGAKWCTHVVALCLFRI). Ser-437 bears the Phosphoserine mark. Disordered stretches follow at residues 514–727 (SRPG…EEDD), 803–823 (NPPD…KVST), and 1016–1232 (SQTH…VPNQ). Basic and acidic residues-rich tracts occupy residues 523–532 (GLEESRDRPR) and 566–575 (LSAEGGDKAL). Ser-567 carries the phosphoserine modification. Residues 579 to 602 (GPGGGKAKALGGAGSGSKGSAGGG) are compositionally biased toward gly residues. The span at 1019 to 1040 (HKPQTLSSFYSSSRPTTASQRS) shows a compositional bias: polar residues. Residues 1119–1130 (SRGGYNGRGWGS) are compositionally biased toward gly residues. Position 1139 is a phosphothreonine (Thr-1139). The segment covering 1144-1159 (IDSSAPETTSDSSPTL) has biased composition (polar residues). Ser-1153, Ser-1156, and Ser-1160 each carry phosphoserine. The segment covering 1174–1209 (GRGQDSDSISSSSSDSLGSSSSSGSRRASASGGARA) has biased composition (low complexity). The segment covering 1210–1226 (KTVEVGRYKGRRPESHA) has biased composition (basic and acidic residues). Ser-1267 bears the Phosphoserine mark. Disordered regions lie at residues 1442–1464 (SASG…GGPG) and 1635–1656 (QPSP…SQPV). Residues 1447 to 1464 (RAGGEAGRGMPEGRGGPG) are compositionally biased toward gly residues. The residue at position 1836 (Ser-1836) is a Phosphoserine.

It belongs to the ZSWIM8 family. In terms of assembly, component of the SCF-like E3 ubiquitin-protein ligase complex which contains CUL3, RBX1, ELOB, ELOC and ZSWIM8. (Microbial infection) Interacts with Zika virus protein NS5; this interaction allows STAT2 binding and subsequent proteasomal degradation.

The protein resides in the cytoplasm. The protein localises to the cytosol. It participates in protein modification; protein ubiquitination. In terms of biological role, substrate recognition component of a SCF-like E3 ubiquitin-protein ligase complex that promotes target-directed microRNA degradation (TDMD), a process that mediates degradation of microRNAs (miRNAs). The SCF-like E3 ubiquitin-protein ligase complex acts by catalyzing ubiquitination and subsequent degradation of AGO proteins (AGO1, AGO2, AGO3 and/or AGO4), thereby exposing miRNAs for degradation. Specifically recognizes and binds AGO proteins when they are engaged with a TDMD target. May also act as a regulator of axon guidance: specifically recognizes misfolded ROBO3 and promotes its ubiquitination and subsequent degradation. Plays an essential role for proper embryonic development of heart and lung. Controls protein quality of DAB1, a key signal molecule for brain development, thus protecting its signaling strength. Mechanistically, recognizes intrinsically disordered regions of DAB1 and eliminates misfolded DAB1 that cannot be properly phosphorylated. Functionally, (Microbial infection) Participates in Zika virus inhibition of IFN signaling by acting as a scaffold protein to connect ZSWIM8/CUL3 ligase complex and STAT2, leading to STAT2 degradation. The chain is Zinc finger SWIM domain-containing protein 8 from Homo sapiens (Human).